The following is a 468-amino-acid chain: BTB and MATH domain-containing protein 45 (468 aa).

One can recognise an MATH domain in the interval 7–124 (VFELSHVFKD…DDSIIIEVLV (118 aa)). BTB domains lie at 148–215 (SDGI…IDDD) and 304–368 (SDVI…IDDL).

In Caenorhabditis elegans, this protein is BTB and MATH domain-containing protein 45 (bath-45).